We begin with the raw amino-acid sequence, 244 residues long: 7-cyano-7-deazaguanine synthase (244 aa).

17–27 (FSGGQDSTTCL) is an ATP binding site. Positions 205, 220, 223, and 226 each coordinate Zn(2+).

The protein belongs to the QueC family. It depends on Zn(2+) as a cofactor.

The catalysed reaction is 7-carboxy-7-deazaguanine + NH4(+) + ATP = 7-cyano-7-deazaguanine + ADP + phosphate + H2O + H(+). Its pathway is purine metabolism; 7-cyano-7-deazaguanine biosynthesis. Functionally, catalyzes the ATP-dependent conversion of 7-carboxy-7-deazaguanine (CDG) to 7-cyano-7-deazaguanine (preQ(0)). The polypeptide is 7-cyano-7-deazaguanine synthase (Bordetella pertussis (strain Tohama I / ATCC BAA-589 / NCTC 13251)).